The sequence spans 271 residues: Mannosyl-3-phosphoglycerate phosphatase (271 aa).

Asp13 serves as the catalytic Nucleophile. 3 residues coordinate Mg(2+): Asp13, Asp15, and Asp214.

This sequence belongs to the HAD-like hydrolase superfamily. MPGP family. It depends on Mg(2+) as a cofactor.

The protein resides in the cytoplasm. It catalyses the reaction 2-O-(alpha-D-mannosyl)-3-phosphoglycerate + H2O = (2R)-2-O-(alpha-D-mannosyl)-glycerate + phosphate. The sequence is that of Mannosyl-3-phosphoglycerate phosphatase from Escherichia coli (strain K12 / DH10B).